Reading from the N-terminus, the 368-residue chain is Alanine racemase (368 aa).

The active-site Proton acceptor; specific for D-alanine is Lys-40. Residue Lys-40 is modified to N6-(pyridoxal phosphate)lysine. Arg-134 contacts substrate. Catalysis depends on Tyr-263, which acts as the Proton acceptor; specific for L-alanine. A substrate-binding site is contributed by Met-310.

It belongs to the alanine racemase family. The cofactor is pyridoxal 5'-phosphate.

It catalyses the reaction L-alanine = D-alanine. It functions in the pathway amino-acid biosynthesis; D-alanine biosynthesis; D-alanine from L-alanine: step 1/1. In terms of biological role, catalyzes the interconversion of L-alanine and D-alanine. May also act on other amino acids. The sequence is that of Alanine racemase (alr) from Listeria innocua serovar 6a (strain ATCC BAA-680 / CLIP 11262).